Reading from the N-terminus, the 101-residue chain is Ascorbate-specific PTS system EIIB component (101 aa).

The PTS EIIB type-2 domain occupies 3–96 (VRILAVCGNG…KLLKVIKEHF (94 aa)). Catalysis depends on C9, which acts as the Phosphocysteine intermediate. The residue at position 9 (C9) is a Phosphocysteine.

It is found in the cytoplasm. The enzyme catalyses N(pros)-phospho-L-histidyl-[protein] + L-ascorbate(out) = L-ascorbate 6-phosphate(in) + L-histidyl-[protein]. The phosphoenolpyruvate-dependent sugar phosphotransferase system (sugar PTS), a major carbohydrate active transport system, catalyzes the phosphorylation of incoming sugar substrates concomitantly with their translocation across the cell membrane. The enzyme II UlaABC PTS system is involved in ascorbate transport. The sequence is that of Ascorbate-specific PTS system EIIB component (ulaB) from Shigella dysenteriae serotype 1 (strain Sd197).